The primary structure comprises 103 residues: Small ribosomal subunit protein uS10 (103 aa).

This sequence belongs to the universal ribosomal protein uS10 family. As to quaternary structure, part of the 30S ribosomal subunit.

In terms of biological role, involved in the binding of tRNA to the ribosomes. This chain is Small ribosomal subunit protein uS10, found in Acinetobacter baylyi (strain ATCC 33305 / BD413 / ADP1).